The primary structure comprises 427 residues: UPF0597 protein CPF_0803 (427 aa).

The protein belongs to the UPF0597 family.

This is UPF0597 protein CPF_0803 from Clostridium perfringens (strain ATCC 13124 / DSM 756 / JCM 1290 / NCIMB 6125 / NCTC 8237 / Type A).